The chain runs to 371 residues: Methionine import ATP-binding protein MetN (371 aa).

The region spanning isoleucine 29 to valine 270 is the ABC transporter domain. Glycine 67–serine 74 contributes to the ATP binding site.

It belongs to the ABC transporter superfamily. Methionine importer (TC 3.A.1.24) family. In terms of assembly, the complex is composed of two ATP-binding proteins (MetN), two transmembrane proteins (MetI) and a solute-binding protein (MetQ).

Its subcellular location is the cell inner membrane. The catalysed reaction is L-methionine(out) + ATP + H2O = L-methionine(in) + ADP + phosphate + H(+). The enzyme catalyses D-methionine(out) + ATP + H2O = D-methionine(in) + ADP + phosphate + H(+). Its function is as follows. Part of the ABC transporter complex MetNIQ involved in methionine import. Responsible for energy coupling to the transport system. The chain is Methionine import ATP-binding protein MetN from Rhodopseudomonas palustris (strain BisA53).